Here is a 232-residue protein sequence, read N- to C-terminus: MNNFFQDFNLLFSSSLFSSYMDWFYNFNCSLLFGVLSFVSTMFVYLLLSSFYFKSKKIEYQFGELLCSVFPTLILVMQMVPSLSLLYYYGLMNLDSSLTVKVTGHQWYWSYEFSDIPGLEFDSYMKSLDQLELGEPRLLEVDNRCVVPCDVNIRFCITSGDVIHSWALPSMSIKLDAMSGILSTLSYSFPVVGVFYGQCSEICGANHSFMPVALEVTLLDNFKSWCVGLLSD.

Residues Met-1–Ser-30 are Mitochondrial intermembrane-facing. The helical transmembrane segment at Leu-31–Tyr-52 threads the bilayer. Residues Phe-53–Val-69 lie on the Mitochondrial matrix side of the membrane. The chain crosses the membrane as a helical span at residues Phe-70–Tyr-89. The Mitochondrial intermembrane portion of the chain corresponds to Gly-90–Asp-232. Cu cation contacts are provided by His-164, Cys-199, Glu-201, Cys-203, His-207, and Met-210. Residue Glu-201 coordinates Mg(2+).

The protein belongs to the cytochrome c oxidase subunit 2 family. In terms of assembly, component of the cytochrome c oxidase (complex IV, CIV), a multisubunit enzyme composed of a catalytic core of 3 subunits and several supernumerary subunits. The complex exists as a monomer or a dimer and forms supercomplexes (SCs) in the inner mitochondrial membrane with ubiquinol-cytochrome c oxidoreductase (cytochrome b-c1 complex, complex III, CIII). Cu cation is required as a cofactor.

The protein localises to the mitochondrion inner membrane. It carries out the reaction 4 Fe(II)-[cytochrome c] + O2 + 8 H(+)(in) = 4 Fe(III)-[cytochrome c] + 2 H2O + 4 H(+)(out). Functionally, component of the cytochrome c oxidase, the last enzyme in the mitochondrial electron transport chain which drives oxidative phosphorylation. The respiratory chain contains 3 multisubunit complexes succinate dehydrogenase (complex II, CII), ubiquinol-cytochrome c oxidoreductase (cytochrome b-c1 complex, complex III, CIII) and cytochrome c oxidase (complex IV, CIV), that cooperate to transfer electrons derived from NADH and succinate to molecular oxygen, creating an electrochemical gradient over the inner membrane that drives transmembrane transport and the ATP synthase. Cytochrome c oxidase is the component of the respiratory chain that catalyzes the reduction of oxygen to water. Electrons originating from reduced cytochrome c in the intermembrane space (IMS) are transferred via the dinuclear copper A center (CU(A)) of subunit 2 and heme A of subunit 1 to the active site in subunit 1, a binuclear center (BNC) formed by heme A3 and copper B (CU(B)). The BNC reduces molecular oxygen to 2 water molecules using 4 electrons from cytochrome c in the IMS and 4 protons from the mitochondrial matrix. In Ascaris suum (Pig roundworm), this protein is Cytochrome c oxidase subunit 2 (COII).